We begin with the raw amino-acid sequence, 200 residues long: Interferon lambda-1 (200 aa).

Residues 1-19 (MAAAWTVVLVTLVLGLAVA) form the signal peptide. N-linked (GlcNAc...) asparagine glycosylation occurs at N65. A disulfide bond links C68 and C164.

This sequence belongs to the lambda interferon family.

The protein resides in the secreted. Cytokine with antiviral, antitumour and immunomodulatory activities. Plays a critical role in the antiviral host defense, predominantly in the epithelial tissues. Acts as a ligand for the heterodimeric class II cytokine receptor composed of IL10RB and IFNLR1, and receptor engagement leads to the activation of the JAK/STAT signaling pathway resulting in the expression of IFN-stimulated genes (ISG), which mediate the antiviral state. Has a restricted receptor distribution and therefore restricted targets: is primarily active in epithelial cells and this cell type-selective action is because of the epithelial cell-specific expression of its receptor IFNLR1. Exerts an immunomodulatory effect by up-regulating MHC class I antigen expression. The sequence is that of Interferon lambda-1 (IFNL1) from Homo sapiens (Human).